The sequence spans 133 residues: ATP synthase epsilon chain, chloroplastic (133 aa).

Belongs to the ATPase epsilon chain family. In terms of assembly, F-type ATPases have 2 components, CF(1) - the catalytic core - and CF(0) - the membrane proton channel. CF(1) has five subunits: alpha(3), beta(3), gamma(1), delta(1), epsilon(1). CF(0) has three main subunits: a, b and c.

Its subcellular location is the plastid. It is found in the chloroplast thylakoid membrane. Its function is as follows. Produces ATP from ADP in the presence of a proton gradient across the membrane. The chain is ATP synthase epsilon chain, chloroplastic from Solanum lycopersicum (Tomato).